The following is a 786-amino-acid chain: DNA repair and recombination protein RAD54-like (786 aa).

The required for chromatin remodeling, strand pairing activities and coupling of ATPase activity stretch occupies residues Arg2 to Gln9. Thr22 carries the post-translational modification Phosphothreonine. The region spanning Glu165–Glu340 is the Helicase ATP-binding domain. Asp178–Thr185 contacts ATP. The short motif at Asp291–His294 is the DEGH box element. The Helicase C-terminal domain occupies Leu497–Thr654. The disordered stretch occupies residues Lys740–Phe786. A compositionally biased stretch (polar residues) spans Glu752–Leu766.

The protein belongs to the SNF2/RAD54 helicase family. In terms of assembly, interacts (via N-terminus) with spn-A/Rad51.

The protein localises to the nucleus. In terms of biological role, involved in mitotic DNA repair and meiotic recombination. Functions in the recombinational DNA repair pathway. Essential for interhomolog gene conversion (GC), but may have a less important role in intersister GC than spn-A/Rad51. In the presence of DNA, spn-A/Rad51 enhances the ATPase activity of okr/Rad54. This chain is DNA repair and recombination protein RAD54-like, found in Drosophila virilis (Fruit fly).